We begin with the raw amino-acid sequence, 227 residues long: ATP-dependent dethiobiotin synthetase BioD (227 aa).

12–17 (DAGKTH) contributes to the ATP binding site. Threonine 16 is a Mg(2+) binding site. The active site involves lysine 37. Residue serine 41 coordinates substrate. ATP is bound by residues aspartate 54, 116–119 (EGAG), 176–177 (NQ), and 205–207 (PYS). Mg(2+) contacts are provided by aspartate 54 and glutamate 116.

The protein belongs to the dethiobiotin synthetase family. Homodimer. Requires Mg(2+) as cofactor.

Its subcellular location is the cytoplasm. The catalysed reaction is (7R,8S)-7,8-diammoniononanoate + CO2 + ATP = (4R,5S)-dethiobiotin + ADP + phosphate + 3 H(+). It functions in the pathway cofactor biosynthesis; biotin biosynthesis; biotin from 7,8-diaminononanoate: step 1/2. In terms of biological role, catalyzes a mechanistically unusual reaction, the ATP-dependent insertion of CO2 between the N7 and N8 nitrogen atoms of 7,8-diaminopelargonic acid (DAPA, also called 7,8-diammoniononanoate) to form a ureido ring. This Pseudoalteromonas translucida (strain TAC 125) protein is ATP-dependent dethiobiotin synthetase BioD.